Reading from the N-terminus, the 1215-residue chain is Protein benign gonial cell neoplasm (1215 aa).

One copy of the ANK repeat lies at 407 to 439; sequence TGKTAVHFASELNKANHLRLLLFMGADPYIVDL. Thr898 is modified (phosphothreonine).

In terms of assembly, part of a complex composed of at least mei-P26, bam, bgcn and Sxl; this complex is involved in translational repression of nanos mRNA. Interacts with bam (via C-terminus); the interaction is direct. Interacts with mei-P26; the interaction is direct and does not require bam. Weakly interacts with wh/wuho; this interaction may be required for the function or formation of the mei-P26-bgcn-bam-Sxl complex. Part of a complex composed of at least tut, bam and bgcn; complex formation does not require RNA. Interacts with tut; the interaction is indirect and is mediated by bam. As part of the bam-bgcn-tut complex associates with twin; may recruit the CCR4-NOT1 deadenylation complex to mRNA 3'UTRs to mediate post-transcriptional regulation of expression. As to expression, expressed in testis and in 5-8 germline stem cells of ovaries, immediately adjacent to terminal filament. Expressed in ovarian germline cells throughout the germarium (at protein level).

Functionally, forms a complex with tut and bam involved in 3'UTR-dependent post-transcriptional repression of several 3'-RNA processing factors, which promotes germline stem cell lineage differentiation and mitosis-to-meiosis transition. Part of a complex with bam involved in 3'-UTR-dependent translational repression of a subset of mRNAs, including those for mei-P26, nanos and shg/E-cadherin; may act as a promiscuous RNA-binding protein tethering bam to its target mRNAs. Required for regulating the progression of gonialblast cells through transit amplification and differentiation into gametes. This chain is Protein benign gonial cell neoplasm, found in Drosophila melanogaster (Fruit fly).